The primary structure comprises 427 residues: Histidinol dehydrogenase (427 aa).

Residues S232, Q254, and H257 each coordinate substrate. Q254 and H257 together coordinate Zn(2+). Active-site proton acceptor residues include E322 and H323. Substrate-binding residues include H323, D356, E410, and H415. A Zn(2+)-binding site is contributed by D356. Residue H415 coordinates Zn(2+).

The protein belongs to the histidinol dehydrogenase family. It depends on Zn(2+) as a cofactor.

It carries out the reaction L-histidinol + 2 NAD(+) + H2O = L-histidine + 2 NADH + 3 H(+). Its pathway is amino-acid biosynthesis; L-histidine biosynthesis; L-histidine from 5-phospho-alpha-D-ribose 1-diphosphate: step 9/9. Catalyzes the sequential NAD-dependent oxidations of L-histidinol to L-histidinaldehyde and then to L-histidine. This chain is Histidinol dehydrogenase, found in Listeria monocytogenes serotype 4b (strain F2365).